The following is a 398-amino-acid chain: NADH-quinone oxidoreductase subunit D (398 aa).

Belongs to the complex I 49 kDa subunit family. As to quaternary structure, NDH-1 is composed of 14 different subunits. Subunits NuoB, C, D, E, F, and G constitute the peripheral sector of the complex.

Its subcellular location is the cell inner membrane. The catalysed reaction is a quinone + NADH + 5 H(+)(in) = a quinol + NAD(+) + 4 H(+)(out). NDH-1 shuttles electrons from NADH, via FMN and iron-sulfur (Fe-S) centers, to quinones in the respiratory chain. The immediate electron acceptor for the enzyme in this species is believed to be ubiquinone. Couples the redox reaction to proton translocation (for every two electrons transferred, four hydrogen ions are translocated across the cytoplasmic membrane), and thus conserves the redox energy in a proton gradient. In Anaplasma marginale (strain St. Maries), this protein is NADH-quinone oxidoreductase subunit D.